A 298-amino-acid chain; its full sequence is MPMQKEFRTSAYHSRFQTPFRRRQEGKTDYYQRKRLVTQHKAKYNSPKYRLVVRFTNKDIIAQIVSAHITGDVVFTAAYAHELPRYGIKYGLTNWSAAYAVGLLVARRALQKLGLDETYTGVEEVEGEFELTEAVEDGPRPFKVFLDIGLQRTTTGARVFGVLKGASDGGLYVPHSPNRFPGWDIEAEELDAELLRKYIFGGHVAEYMEELLDDDEEKYKSIFKNYIEEEIESEDVEEIYANAHEAIRADPSFKPTEKKFTKEQYKAESKKYRQQKLTRAERQAKVAKKIAEFKAQQE.

The protein belongs to the universal ribosomal protein uL18 family. As to quaternary structure, component of the large ribosomal subunit. Mature ribosomes consist of a small (40S) and a large (60S) subunit. The 40S subunit contains about 32 different proteins and 1 molecule of RNA (18S). The 60S subunit contains 45 different proteins and 3 molecules of RNA (25S, 5.8S and 5S).

It is found in the cytoplasm. Functionally, component of the ribosome, a large ribonucleoprotein complex responsible for the synthesis of proteins in the cell. The small ribosomal subunit (SSU) binds messenger RNAs (mRNAs) and translates the encoded message by selecting cognate aminoacyl-transfer RNA (tRNA) molecules. The large subunit (LSU) contains the ribosomal catalytic site termed the peptidyl transferase center (PTC), which catalyzes the formation of peptide bonds, thereby polymerizing the amino acids delivered by tRNAs into a polypeptide chain. The nascent polypeptides leave the ribosome through a tunnel in the LSU and interact with protein factors that function in enzymatic processing, targeting, and the membrane insertion of nascent chains at the exit of the ribosomal tunnel. In Candida albicans (strain SC5314 / ATCC MYA-2876) (Yeast), this protein is Large ribosomal subunit protein uL18.